Here is a 329-residue protein sequence, read N- to C-terminus: D-alanine--D-alanine ligase (329 aa).

Residues 121–327 enclose the ATP-grasp domain; that stretch reads KLWYDALDIP…FSEFLAQCVT (207 aa). Position 151–206 (151–206) interacts with ATP; it reads AFGHWGSIFVKAARQGSSVGCYKVTTEDQIAPAIEAAFGFSEQVLVEQAVKPRELE. The Mg(2+) site is built by D281, E294, and N296.

Belongs to the D-alanine--D-alanine ligase family. Requires Mg(2+) as cofactor. Mn(2+) serves as cofactor.

Its subcellular location is the cytoplasm. It catalyses the reaction 2 D-alanine + ATP = D-alanyl-D-alanine + ADP + phosphate + H(+). It functions in the pathway cell wall biogenesis; peptidoglycan biosynthesis. Its function is as follows. Cell wall formation. The chain is D-alanine--D-alanine ligase from Vibrio cholerae serotype O1 (strain ATCC 39541 / Classical Ogawa 395 / O395).